The sequence spans 744 residues: Merozoite surface protein 9 (744 aa).

Residues 1–23 (MMNMKIVLFSLLLFVIRWNIISC) form the signal peptide. Positions 77–235 (KELLKEKQYT…VNDEDDVNDE (159 aa)) are interaction with MSP1 and host SLC4A1/Band 3. Disordered regions lie at residues 202-282 (KSQG…ATAY), 459-487 (DNQA…PTED), 512-540 (NNTP…ENFD), and 666-744 (VDAL…EESK). Residues 211 to 224 (SQNQNENNDNQKYQ) are compositionally biased toward polar residues. A run of 8 repeats spans residues 226–231 (VNDEDD), 232–237 (VNDEED), 238–243 (TNDDED), 244–249 (TNDEED), 250–255 (TNDDED), 256–261 (TNDDED), 262–267 (TNDEED), and 268–273 (TNDEED). The 8 X 6 AA tandem repeats of [VT]-N-D-[ED]-[ED]-D stretch occupies residues 226 to 273 (VNDEDDVNDEEDTNDDEDTNDEEDTNDDEDTNDDEDTNDEEDTNDEED). A compositionally biased stretch (acidic residues) spans 226–274 (VNDEDDVNDEEDTNDDEDTNDEEDTNDDEDTNDDEDTNDEEDTNDEEDH). The tract at residues 364–528 (LKDNLINYEF…PPTQSKKKNK (165 aa)) is interaction with MSP1 and host SLC4A1/Band 3. Residues 459–473 (DNQAVDTKSMEEPKV) are compositionally biased toward basic and acidic residues. Residues 512 to 521 (NNTPNVVPPT) are compositionally biased toward low complexity. Residues 644–734 (NQETEEEMEK…QEEEEEEEIV (91 aa)) are a coiled coil. 2 stretches are compositionally biased toward basic and acidic residues: residues 672–698 (KNKE…KEKE) and 706–719 (EKEK…KEEK). Residues 720–734 (EKEEEQEEEEEEEIV) are compositionally biased toward acidic residues.

Belongs to the plasmodium ABRA family. As to quaternary structure, forms a complex composed of MSP1, MSP6, MSP7, MSP9 and MSP3; within the complex, MSP6 and MSP9 mediate the binding to the host erythrocyte. Interacts with MSP1 subunits p19 and p42; the interaction is direct. Interacts with host SLC4A1/Band 3 protein (via the 5ABC region). MSP1 subunits p19 or p42, and MSP9 form a co-ligand complex that interacts with host SLC4A1/Band 3 protein. Not glycosylated.

Its subcellular location is the cell membrane. The protein localises to the parasitophorous vacuole lumen. It is found in the secreted. In terms of biological role, during the asexual blood stage, involved in the sialic acid-independent (SAID) merozoite invasion of host erythrocytes by binding to host SLC4A1/Band 3 protein on the surface of the host erythrocyte. The chain is Merozoite surface protein 9 from Plasmodium falciparum (isolate 7G8).